The following is a 223-amino-acid chain: Probable transaldolase (223 aa).

The active-site Schiff-base intermediate with substrate is the Lys-92.

The protein belongs to the transaldolase family. Type 3B subfamily.

It localises to the cytoplasm. It catalyses the reaction D-sedoheptulose 7-phosphate + D-glyceraldehyde 3-phosphate = D-erythrose 4-phosphate + beta-D-fructose 6-phosphate. It participates in carbohydrate degradation; pentose phosphate pathway; D-glyceraldehyde 3-phosphate and beta-D-fructose 6-phosphate from D-ribose 5-phosphate and D-xylulose 5-phosphate (non-oxidative stage): step 2/3. Its function is as follows. Transaldolase is important for the balance of metabolites in the pentose-phosphate pathway. This chain is Probable transaldolase, found in Thermus thermophilus (strain ATCC 27634 / DSM 579 / HB8).